Reading from the N-terminus, the 888-residue chain is Leucine--tRNA ligase (888 aa).

Residues 42-52 (PYPSGKLHMGH) carry the 'HIGH' region motif. Residues 640–644 (TMSKS) carry the 'KMSKS' region motif. ATP is bound at residue Lys643.

This sequence belongs to the class-I aminoacyl-tRNA synthetase family.

The protein resides in the cytoplasm. The catalysed reaction is tRNA(Leu) + L-leucine + ATP = L-leucyl-tRNA(Leu) + AMP + diphosphate. In Polaromonas naphthalenivorans (strain CJ2), this protein is Leucine--tRNA ligase.